Reading from the N-terminus, the 94-residue chain is Integration host factor subunit beta (94 aa).

This sequence belongs to the bacterial histone-like protein family. As to quaternary structure, heterodimer of an alpha and a beta chain.

Functionally, this protein is one of the two subunits of integration host factor, a specific DNA-binding protein that functions in genetic recombination as well as in transcriptional and translational control. This chain is Integration host factor subunit beta, found in Serratia proteamaculans (strain 568).